The primary structure comprises 293 residues: 4-hydroxybenzoate octaprenyltransferase (293 aa).

A run of 8 helical transmembrane segments spans residues 41-61 (FAAA…LGVI), 98-118 (TEAK…DLLL), 122-142 (TFLL…MKRF), 145-165 (LPQV…YGAV), 167-187 (ESLP…TVAY), 218-238 (IIAL…WISQ), 241-261 (WGYF…CWLT), and 272-292 (AFLN…VGIY).

This sequence belongs to the UbiA prenyltransferase family. It depends on Mg(2+) as a cofactor.

It is found in the cell inner membrane. It carries out the reaction all-trans-octaprenyl diphosphate + 4-hydroxybenzoate = 4-hydroxy-3-(all-trans-octaprenyl)benzoate + diphosphate. It functions in the pathway cofactor biosynthesis; ubiquinone biosynthesis. Functionally, catalyzes the prenylation of para-hydroxybenzoate (PHB) with an all-trans polyprenyl group. Mediates the second step in the final reaction sequence of ubiquinone-8 (UQ-8) biosynthesis, which is the condensation of the polyisoprenoid side chain with PHB, generating the first membrane-bound Q intermediate 3-octaprenyl-4-hydroxybenzoate. This chain is 4-hydroxybenzoate octaprenyltransferase, found in Actinobacillus pleuropneumoniae serotype 5b (strain L20).